Consider the following 93-residue polypeptide: uncharacterized protein (93 aa).

Its subcellular location is the plastid. The protein resides in the chloroplast. This is an uncharacterized protein from Diacronema lutheri (Unicellular marine alga).